A 142-amino-acid chain; its full sequence is Large ribosomal subunit protein uL13 (142 aa).

The protein belongs to the universal ribosomal protein uL13 family. In terms of assembly, part of the 50S ribosomal subunit.

This protein is one of the early assembly proteins of the 50S ribosomal subunit, although it is not seen to bind rRNA by itself. It is important during the early stages of 50S assembly. In Cupriavidus metallidurans (strain ATCC 43123 / DSM 2839 / NBRC 102507 / CH34) (Ralstonia metallidurans), this protein is Large ribosomal subunit protein uL13.